Here is a 170-residue protein sequence, read N- to C-terminus: Protein SprT (170 aa).

The region spanning 25-165 (SEQFFDRTFA…QYCKGRLEPV (141 aa)) is the SprT-like domain. Zn(2+) is bound at residue histidine 78. Glutamate 79 is a catalytic residue. Histidine 82 provides a ligand contact to Zn(2+).

The protein belongs to the SprT family. Zn(2+) serves as cofactor.

Its subcellular location is the cytoplasm. In Actinobacillus succinogenes (strain ATCC 55618 / DSM 22257 / CCUG 43843 / 130Z), this protein is Protein SprT.